Reading from the N-terminus, the 90-residue chain is U7-theraphotoxin-Hhn1f (90 aa).

The N-terminal stretch at 1–19 (MKTAIFTVVLALAVFAVLS) is a signal peptide. Positions 20-50 (FGWEANEKALSEEFTELIHEKEAASETEARG) are excised as a propeptide. Intrachain disulfides connect Cys-51–Cys-65, Cys-58–Cys-70, and Cys-64–Cys-81.

Belongs to the neurotoxin 10 (Hwtx-1) family. 13 (Hntx-13) subfamily. As to expression, expressed by the venom gland.

It is found in the secreted. In terms of biological role, ion channel inhibitor. The sequence is that of U7-theraphotoxin-Hhn1f from Cyriopagopus hainanus (Chinese bird spider).